Reading from the N-terminus, the 273-residue chain is NAD kinase (273 aa).

Asp53 functions as the Proton acceptor in the catalytic mechanism. Residues 53–54 (DG), Arg58, 128–129 (NE), Asp157, 168–173 (TAYNFS), and Ala192 contribute to the NAD(+) site.

It belongs to the NAD kinase family. It depends on a divalent metal cation as a cofactor.

It localises to the cytoplasm. It carries out the reaction NAD(+) + ATP = ADP + NADP(+) + H(+). Involved in the regulation of the intracellular balance of NAD and NADP, and is a key enzyme in the biosynthesis of NADP. Catalyzes specifically the phosphorylation on 2'-hydroxyl of the adenosine moiety of NAD to yield NADP. The chain is NAD kinase from Finegoldia magna (strain ATCC 29328 / DSM 20472 / WAL 2508) (Peptostreptococcus magnus).